Here is a 432-residue protein sequence, read N- to C-terminus: Adenylosuccinate synthetase (432 aa).

GTP-binding positions include 13-19 (GDEGKGK) and 41-43 (GHT). Asp14 (proton acceptor) is an active-site residue. The Mg(2+) site is built by Asp14 and Gly41. Residues 14–17 (DEGK), 39–42 (NAGH), Thr130, Arg144, Gln225, Thr240, and Arg304 contribute to the IMP site. Residue His42 is the Proton donor of the active site. 300 to 306 (ATTGRRR) lines the substrate pocket. GTP is bound by residues Arg306, 332-334 (KLD), and 415-417 (STG).

Belongs to the adenylosuccinate synthetase family. As to quaternary structure, homodimer. It depends on Mg(2+) as a cofactor.

The protein localises to the cytoplasm. It catalyses the reaction IMP + L-aspartate + GTP = N(6)-(1,2-dicarboxyethyl)-AMP + GDP + phosphate + 2 H(+). Its pathway is purine metabolism; AMP biosynthesis via de novo pathway; AMP from IMP: step 1/2. Plays an important role in the de novo pathway of purine nucleotide biosynthesis. Catalyzes the first committed step in the biosynthesis of AMP from IMP. The protein is Adenylosuccinate synthetase of Klebsiella pneumoniae subsp. pneumoniae (strain ATCC 700721 / MGH 78578).